The sequence spans 388 residues: Protein-glutamate methylesterase/protein-glutamine glutaminase 1 (388 aa).

In terms of domain architecture, Response regulatory spans 4–121; sequence QVLVVDDSSF…ATNKDEAIRL (118 aa). 4-aspartylphosphate is present on D55. The interval 149–190 is disordered; sequence SARAGLSSTSPTLGSSTLGRSPASGLASSASRNSPTVSTPAS. Residues 153–169 are compositionally biased toward low complexity; it reads GLSSTSPTLGSSTLGRS. Residues 174–189 show a composition bias toward polar residues; the sequence is LASSASRNSPTVSTPA. Positions 188-388 constitute a CheB-type methylesterase domain; it reads PASAIRASGK…EAILKESGRG (201 aa). Catalysis depends on residues S207, H234, and D330.

This sequence belongs to the CheB family. Post-translationally, phosphorylated by CheA. Phosphorylation of the N-terminal regulatory domain activates the methylesterase activity.

Its subcellular location is the cytoplasm. It catalyses the reaction [protein]-L-glutamate 5-O-methyl ester + H2O = L-glutamyl-[protein] + methanol + H(+). It carries out the reaction L-glutaminyl-[protein] + H2O = L-glutamyl-[protein] + NH4(+). In terms of biological role, involved in chemotaxis. Part of a chemotaxis signal transduction system that modulates chemotaxis in response to various stimuli. Catalyzes the demethylation of specific methylglutamate residues introduced into the chemoreceptors (methyl-accepting chemotaxis proteins or MCP) by CheR. Also mediates the irreversible deamidation of specific glutamine residues to glutamic acid. This is Protein-glutamate methylesterase/protein-glutamine glutaminase 1 from Shewanella denitrificans (strain OS217 / ATCC BAA-1090 / DSM 15013).